Reading from the N-terminus, the 404-residue chain is Cysteine desulfurase IscS (404 aa).

Pyridoxal 5'-phosphate contacts are provided by residues 75-76 (AT), Asn-155, Gln-183, and 203-205 (SAH). The residue at position 206 (Lys-206) is an N6-(pyridoxal phosphate)lysine. Thr-243 lines the pyridoxal 5'-phosphate pocket. Residue Cys-328 is the Cysteine persulfide intermediate of the active site. Cys-328 provides a ligand contact to [2Fe-2S] cluster.

This sequence belongs to the class-V pyridoxal-phosphate-dependent aminotransferase family. NifS/IscS subfamily. As to quaternary structure, homodimer. Forms a heterotetramer with IscU, interacts with other sulfur acceptors. Pyridoxal 5'-phosphate is required as a cofactor.

The protein resides in the cytoplasm. The enzyme catalyses (sulfur carrier)-H + L-cysteine = (sulfur carrier)-SH + L-alanine. It participates in cofactor biosynthesis; iron-sulfur cluster biosynthesis. Its function is as follows. Master enzyme that delivers sulfur to a number of partners involved in Fe-S cluster assembly, tRNA modification or cofactor biosynthesis. Catalyzes the removal of elemental sulfur atoms from cysteine to produce alanine. Functions as a sulfur delivery protein for Fe-S cluster synthesis onto IscU, an Fe-S scaffold assembly protein, as well as other S acceptor proteins. This is Cysteine desulfurase IscS from Pseudomonas fluorescens (strain SBW25).